The sequence spans 548 residues: Membrane protein insertase YidC (548 aa).

Residues N6 to D26 form a helical membrane-spanning segment. The interval N28–S55 is disordered. Residues Q30–Q50 show a composition bias toward low complexity. 4 consecutive transmembrane segments (helical) span residues F350–Y370, L420–L440, L458–I478, and P499–V519.

The protein belongs to the OXA1/ALB3/YidC family. Type 1 subfamily. In terms of assembly, interacts with the Sec translocase complex via SecD. Specifically interacts with transmembrane segments of nascent integral membrane proteins during membrane integration.

Its subcellular location is the cell inner membrane. Its function is as follows. Required for the insertion and/or proper folding and/or complex formation of integral membrane proteins into the membrane. Involved in integration of membrane proteins that insert both dependently and independently of the Sec translocase complex, as well as at least some lipoproteins. Aids folding of multispanning membrane proteins. The sequence is that of Membrane protein insertase YidC from Escherichia coli (strain K12 / MC4100 / BW2952).